A 298-amino-acid polypeptide reads, in one-letter code: Hydroxymethylglutaryl-CoA lyase, mitochondrial (298 aa).

The region spanning 6-273 (VKVVEVGPRD…HTGVDLQKLM (268 aa)) is the Pyruvate carboxyltransferase domain. Residue Arg-14 coordinates substrate. Residue Asp-15 coordinates a divalent metal cation. N6-acetyllysine is present on Lys-21. A divalent metal cation contacts are provided by His-206 and His-208. Residue Cys-239 is part of the active site. Asn-248 provides a ligand contact to a divalent metal cation. Positions 296 to 298 (CRL) match the Microbody targeting signal motif.

The protein belongs to the HMG-CoA lyase family. In terms of assembly, homodimer; disulfide-linked. Can also form homotetramers.

It is found in the mitochondrion matrix. Its subcellular location is the peroxisome. It carries out the reaction (3S)-3-hydroxy-3-methylglutaryl-CoA = acetoacetate + acetyl-CoA. It functions in the pathway metabolic intermediate metabolism; (S)-3-hydroxy-3-methylglutaryl-CoA degradation; acetoacetate from (S)-3-hydroxy-3-methylglutaryl-CoA: step 1/1. Functionally, mitochondrial 3-hydroxy-3-methylglutaryl-CoA lyase that catalyzes a cation-dependent cleavage of (S)-3-hydroxy-3-methylglutaryl-CoA into acetyl-CoA and acetoacetate, a key step in ketogenesis. Terminal step in leucine catabolism. Ketone bodies (beta-hydroxybutyrate, acetoacetate and acetone) are essential as an alternative source of energy to glucose, as lipid precursors and as regulators of metabolism. The sequence is that of Hydroxymethylglutaryl-CoA lyase, mitochondrial (HMGCL) from Gallus gallus (Chicken).